The primary structure comprises 405 residues: Argininosuccinate synthase (405 aa).

ATP is bound by residues 10–18 (AYSGGLDTS) and A37. The L-citrulline site is built by Y88 and S93. G118 lines the ATP pocket. The L-aspartate site is built by T120, N124, and D125. L-citrulline is bound at residue N124. L-citrulline contacts are provided by R128, S179, S188, E264, and Y276.

The protein belongs to the argininosuccinate synthase family. Type 1 subfamily. As to quaternary structure, homotetramer.

Its subcellular location is the cytoplasm. It catalyses the reaction L-citrulline + L-aspartate + ATP = 2-(N(omega)-L-arginino)succinate + AMP + diphosphate + H(+). It participates in amino-acid biosynthesis; L-arginine biosynthesis; L-arginine from L-ornithine and carbamoyl phosphate: step 2/3. This chain is Argininosuccinate synthase, found in Pseudomonas fluorescens (strain ATCC BAA-477 / NRRL B-23932 / Pf-5).